Reading from the N-terminus, the 318-residue chain is GTP cyclohydrolase MptA (318 aa).

Belongs to the GTP cyclohydrolase IV family. As to quaternary structure, homodimer. Fe(2+) serves as cofactor.

It carries out the reaction GTP + H2O = 7,8-dihydroneopterin 2',3'-cyclic phosphate + formate + diphosphate + H(+). Its pathway is cofactor biosynthesis; 5,6,7,8-tetrahydromethanopterin biosynthesis. Its function is as follows. Converts GTP to 7,8-dihydro-D-neopterin 2',3'-cyclic phosphate, the first intermediate in the biosynthesis of coenzyme methanopterin. The protein is GTP cyclohydrolase MptA of Methanosarcina acetivorans (strain ATCC 35395 / DSM 2834 / JCM 12185 / C2A).